A 418-amino-acid polypeptide reads, in one-letter code: Serine hydroxymethyltransferase (418 aa).

(6S)-5,6,7,8-tetrahydrofolate contacts are provided by residues leucine 121 and glycine 125 to leucine 127. N6-(pyridoxal phosphate)lysine is present on lysine 230. Serine 355–phenylalanine 357 serves as a coordination point for (6S)-5,6,7,8-tetrahydrofolate.

The protein belongs to the SHMT family. In terms of assembly, homodimer. Pyridoxal 5'-phosphate serves as cofactor.

It localises to the cytoplasm. It carries out the reaction (6R)-5,10-methylene-5,6,7,8-tetrahydrofolate + glycine + H2O = (6S)-5,6,7,8-tetrahydrofolate + L-serine. It participates in one-carbon metabolism; tetrahydrofolate interconversion. Its pathway is amino-acid biosynthesis; glycine biosynthesis; glycine from L-serine: step 1/1. Functionally, catalyzes the reversible interconversion of serine and glycine with tetrahydrofolate (THF) serving as the one-carbon carrier. This reaction serves as the major source of one-carbon groups required for the biosynthesis of purines, thymidylate, methionine, and other important biomolecules. Also exhibits THF-independent aldolase activity toward beta-hydroxyamino acids, producing glycine and aldehydes, via a retro-aldol mechanism. The sequence is that of Serine hydroxymethyltransferase from Streptococcus pyogenes serotype M6 (strain ATCC BAA-946 / MGAS10394).